We begin with the raw amino-acid sequence, 345 residues long: Phosphate acyltransferase (345 aa).

Belongs to the PlsX family. As to quaternary structure, homodimer. Probably interacts with PlsY.

It localises to the cytoplasm. It carries out the reaction a fatty acyl-[ACP] + phosphate = an acyl phosphate + holo-[ACP]. The protein operates within lipid metabolism; phospholipid metabolism. In terms of biological role, catalyzes the reversible formation of acyl-phosphate (acyl-PO(4)) from acyl-[acyl-carrier-protein] (acyl-ACP). This enzyme utilizes acyl-ACP as fatty acyl donor, but not acyl-CoA. The sequence is that of Phosphate acyltransferase from Limosilactobacillus fermentum (strain NBRC 3956 / LMG 18251) (Lactobacillus fermentum).